The following is a 586-amino-acid chain: Methionine--tRNA ligase, mitochondrial (586 aa).

The N-terminal 46 residues, 1 to 46 (MLRQCARWVLTRTRFGRGCRRYGSCSPSASGDAGEARAYFTTPIFY), are a transit peptide targeting the mitochondrion. A 'HIGH' region motif is present at residues 45–55 (FYVNAAPHIGH). The 'KMSKS' region motif lies at 340–344 (KMSKS). Lys-343 contacts ATP.

This sequence belongs to the class-I aminoacyl-tRNA synthetase family.

It is found in the mitochondrion matrix. It catalyses the reaction tRNA(Met) + L-methionine + ATP = L-methionyl-tRNA(Met) + AMP + diphosphate. The chain is Methionine--tRNA ligase, mitochondrial (Mars2) from Mus musculus (Mouse).